A 912-amino-acid chain; its full sequence is Translation initiation factor IF-2 (912 aa).

Positions 26 to 297 are disordered; that stretch reads SDQGEFVKSA…RGRKSKRAKR (272 aa). Residues 56 to 74 show a composition bias toward low complexity; sequence KPAPAASNGAAAEAAAPPK. Residues 100–120 show a composition bias toward pro residues; it reads APEPPAAPAAPAAPAPKPSPA. The segment covering 121–131 has biased composition (low complexity); it reads ARPAAAEAAAP. 3 stretches are compositionally biased toward pro residues: residues 132-152, 173-183, and 192-218; these read APAP…PGAP, PRPQAPRPGAP, and NMPP…PGGG. Over residues 219–283 the composition is skewed to gly residues; that stretch reads PRPGGAGRPG…GAAGAFGRPG (65 aa). Positions 287–296 are enriched in basic residues; sequence KRGRKSKRAK. The 172-residue stretch at 408–579 folds into the tr-type G domain; the sequence is TRPPVVTVMG…AVLLTADAAL (172 aa). Residues 417–424 are G1; it reads GHVDHGKT. Position 417-424 (417-424) interacts with GTP; the sequence is GHVDHGKT. Positions 442 to 446 are G2; it reads GITQH. The interval 467–470 is G3; that stretch reads DTPG. GTP is bound by residues 467 to 471 and 521 to 524; these read DTPGH and NKID. The segment at 521–524 is G4; the sequence is NKID. The tract at residues 557-559 is G5; that stretch reads SAR.

It belongs to the TRAFAC class translation factor GTPase superfamily. Classic translation factor GTPase family. IF-2 subfamily.

Its subcellular location is the cytoplasm. Functionally, one of the essential components for the initiation of protein synthesis. Protects formylmethionyl-tRNA from spontaneous hydrolysis and promotes its binding to the 30S ribosomal subunits. Also involved in the hydrolysis of GTP during the formation of the 70S ribosomal complex. In Mycobacteroides abscessus (strain ATCC 19977 / DSM 44196 / CCUG 20993 / CIP 104536 / JCM 13569 / NCTC 13031 / TMC 1543 / L948) (Mycobacterium abscessus), this protein is Translation initiation factor IF-2.